Here is a 341-residue protein sequence, read N- to C-terminus: Paired box protein Pax-9 (341 aa).

Positions 4–130 (AFGEVNQLGG…SSISRILRNK (127 aa)) form a DNA-binding region, paired. The tract at residues 7-63 (EVNQLGGVFVNGRPLPNAIRLRIVELAQLGIRPCDISRQLRVSHGCVSKILARYNET) is PAI subdomain. Positions 82–130 (TVVKHIRTYKQRDPGIFAWEIRDRLLADGVCDKYNVPSVSSISRILRNK) are RED subdomain. Positions 168-189 (AAAAKVPTPPGVPAIPGSVAMP) are interaction with KDM5B.

In terms of assembly, interacts with KDM5B.

Its subcellular location is the nucleus. Functionally, transcription factor required for normal development of thymus, parathyroid glands, ultimobranchial bodies, teeth, skeletal elements of skull and larynx as well as distal limbs. This is Paired box protein Pax-9 (PAX9) from Saimiri boliviensis boliviensis (Bolivian squirrel monkey).